A 469-amino-acid chain; its full sequence is Coumaroyl-CoA:anthocyanidin 3-O-glucoside-6''-O-coumaroyltransferase 1 (469 aa).

Residue Met-1 is modified to N-acetylmethionine. Residues His-173 and Asp-410 each act as proton acceptor in the active site.

Belongs to the plant acyltransferase family. Highly expressed in flowers, leaves and roots. Lower levels of expression in stems and siliques.

Involved in the acylation of the 6'' position of the 3-O-glucose residue of anthocyanin. Also able to use flavonol 3-glucosides as the acyl acceptor. This Arabidopsis thaliana (Mouse-ear cress) protein is Coumaroyl-CoA:anthocyanidin 3-O-glucoside-6''-O-coumaroyltransferase 1 (3AT1).